The following is a 234-amino-acid chain: NAD-dependent protein deacylase (234 aa).

The Deacetylase sirtuin-type domain maps to 1 to 234 (MKNLVVLTGA…ELKQLLIPAP (234 aa)). An NAD(+)-binding site is contributed by 9-28 (GAGMSAESGISTFRDAGGLW). Substrate contacts are provided by Tyr-53 and Arg-56. 86-89 (QNVD) contacts NAD(+). The Proton acceptor role is filled by His-104. An NAD(+)-binding site is contributed by 175-177 (GTS).

It belongs to the sirtuin family. Class III subfamily.

Its subcellular location is the cytoplasm. It carries out the reaction N(6)-acetyl-L-lysyl-[protein] + NAD(+) + H2O = 2''-O-acetyl-ADP-D-ribose + nicotinamide + L-lysyl-[protein]. The catalysed reaction is N(6)-succinyl-L-lysyl-[protein] + NAD(+) + H2O = 2''-O-succinyl-ADP-D-ribose + nicotinamide + L-lysyl-[protein]. Functionally, NAD-dependent lysine deacetylase and desuccinylase that specifically removes acetyl and succinyl groups on target proteins. Modulates the activities of several proteins which are inactive in their acylated form. The chain is NAD-dependent protein deacylase from Bacteroides thetaiotaomicron (strain ATCC 29148 / DSM 2079 / JCM 5827 / CCUG 10774 / NCTC 10582 / VPI-5482 / E50).